A 406-amino-acid chain; its full sequence is Putative cyclin-F3-2 (406 aa).

The interval 1–107 is disordered; it reads MARPRTRSVA…PGAAGGPWQL (107 aa). Composition is skewed to low complexity over residues 11–21 and 29–57; these read RMEATAAAAAA and NPDG…NAGE.

It belongs to the cyclin family. Cyclin F subfamily.

This chain is Putative cyclin-F3-2 (CYCF3-2), found in Oryza sativa subsp. japonica (Rice).